Reading from the N-terminus, the 368-residue chain is Protein mab-21-like (368 aa).

Belongs to the mab-21 family.

This chain is Protein mab-21-like, found in Drosophila pseudoobscura pseudoobscura (Fruit fly).